Reading from the N-terminus, the 271-residue chain is Cyclase-like protein 3 (271 aa).

The signal sequence occupies residues Met-1 to Ala-21.

This sequence belongs to the Cyclase 1 superfamily.

It localises to the secreted. Its subcellular location is the extracellular space. The protein localises to the extracellular matrix. In Arabidopsis thaliana (Mouse-ear cress), this protein is Cyclase-like protein 3.